Here is a 183-residue protein sequence, read N- to C-terminus: uncharacterized protein (183 aa).

The next 4 membrane-spanning stretches (helical) occupy residues 26–48 (FVAI…IIFY), 72–91 (LLVR…KVFI), 104–121 (IIEA…LIVF), and 125–147 (FTFW…YVLL).

The protein localises to the cell membrane. This is an uncharacterized protein from Aquifex aeolicus (strain VF5).